The sequence spans 242 residues: Transcriptional regulatory protein btr (242 aa).

An HTH crp-type domain is found at 158 to 231; the sequence is MRSEQRLAAF…QREVRLIDLP (74 aa). The H-T-H motif DNA-binding region spans 191–210; it reads REEIGNYLGLTLETVSRLFS.

Functionally, may regulate gene expression in response to changes in oxygen levels or to changes in the redox potential of the bacterial environment. This is Transcriptional regulatory protein btr (btr) from Bordetella pertussis (strain Tohama I / ATCC BAA-589 / NCTC 13251).